A 338-amino-acid polypeptide reads, in one-letter code: Ketol-acid reductoisomerase (NADP(+)) (338 aa).

The region spanning 1-181 is the KARI N-terminal Rossmann domain; the sequence is MKVFYDKDCD…GGGRTGIIET (181 aa). Residues 24-27, R47, S50, T52, and 82-85 contribute to the NADP(+) site; these read YGSQ and DEFQ. The active site involves H107. Residue G133 participates in NADP(+) binding. Residues 182–327 enclose the KARI C-terminal knotted domain; sequence TFKDETETDL…EQLRSMMPWI (146 aa). The Mg(2+) site is built by D190, E194, E226, and E230. S251 provides a ligand contact to substrate.

This sequence belongs to the ketol-acid reductoisomerase family. Mg(2+) is required as a cofactor.

The catalysed reaction is (2R)-2,3-dihydroxy-3-methylbutanoate + NADP(+) = (2S)-2-acetolactate + NADPH + H(+). It catalyses the reaction (2R,3R)-2,3-dihydroxy-3-methylpentanoate + NADP(+) = (S)-2-ethyl-2-hydroxy-3-oxobutanoate + NADPH + H(+). The protein operates within amino-acid biosynthesis; L-isoleucine biosynthesis; L-isoleucine from 2-oxobutanoate: step 2/4. It participates in amino-acid biosynthesis; L-valine biosynthesis; L-valine from pyruvate: step 2/4. In terms of biological role, involved in the biosynthesis of branched-chain amino acids (BCAA). Catalyzes an alkyl-migration followed by a ketol-acid reduction of (S)-2-acetolactate (S2AL) to yield (R)-2,3-dihydroxy-isovalerate. In the isomerase reaction, S2AL is rearranged via a Mg-dependent methyl migration to produce 3-hydroxy-3-methyl-2-ketobutyrate (HMKB). In the reductase reaction, this 2-ketoacid undergoes a metal-dependent reduction by NADPH to yield (R)-2,3-dihydroxy-isovalerate. The protein is Ketol-acid reductoisomerase (NADP(+)) of Pseudomonas entomophila (strain L48).